The sequence spans 139 residues: Endoribonuclease YbeY (139 aa).

Zn(2+)-binding residues include histidine 107, histidine 111, and aspartate 117.

It belongs to the endoribonuclease YbeY family. Zn(2+) is required as a cofactor.

The protein localises to the cytoplasm. Its function is as follows. Single strand-specific metallo-endoribonuclease involved in late-stage 70S ribosome quality control and in maturation of the 3' terminus of the 16S rRNA. This chain is Endoribonuclease YbeY, found in Bacteroides fragilis (strain ATCC 25285 / DSM 2151 / CCUG 4856 / JCM 11019 / LMG 10263 / NCTC 9343 / Onslow / VPI 2553 / EN-2).